Reading from the N-terminus, the 495-residue chain is Pentatricopeptide repeat-containing protein PPR5 homolog, chloroplastic (495 aa).

The interval 1 to 24 (MLAYPTTSSPWPPRHHGAAAAPAA) is disordered. The transit peptide at 1–29 (MLAYPTTSSPWPPRHHGAAAAPAARRHMA) directs the protein to the chloroplast. PPR repeat units lie at residues 120–154 (DNGI…GCRP), 155–189 (DTSV…MKTI), 195–229 (NIVT…PVSP), 230–264 (DIYT…QCRP), 265–299 (DVIT…KEKP), 300–334 (THPT…GFKP), 335–365 (NYVT…LVSS), 370–404 (HLSS…GAVP), and 405–439 (SAST…GIVP). Positions 455 to 495 (DKKPRTVPSKNSASKPDVESANNSGTDTSSKPNLSVWQVAA) are disordered. A compositionally biased stretch (polar residues) spans 462 to 495 (PSKNSASKPDVESANNSGTDTSSKPNLSVWQVAA).

Belongs to the PPR family. P subfamily.

The protein resides in the plastid. It localises to the chloroplast. In terms of biological role, involved in the biogenesis of the plastid translation machinery by promoting the splicing of group II introns in chloroplasts. This chain is Pentatricopeptide repeat-containing protein PPR5 homolog, chloroplastic, found in Oryza sativa subsp. japonica (Rice).